A 161-amino-acid chain; its full sequence is Endoribonuclease YbeY (161 aa).

Residues His-121, His-125, and His-131 each contribute to the Zn(2+) site.

Belongs to the endoribonuclease YbeY family. Requires Zn(2+) as cofactor.

The protein resides in the cytoplasm. In terms of biological role, single strand-specific metallo-endoribonuclease involved in late-stage 70S ribosome quality control and in maturation of the 3' terminus of the 16S rRNA. The sequence is that of Endoribonuclease YbeY from Stenotrophomonas maltophilia (strain K279a).